A 578-amino-acid polypeptide reads, in one-letter code: Endonuclease GajA (578 aa).

The interval 1-341 is ATPase domain; that stretch reads MKFSNITIKN…RLIRVHSTEK (341 aa). 32–36 is a binding site for ATP; the sequence is DIGKT. Residues 370-510 are toprim domain; that stretch reads LFAERVLLIE…LGERIYLSEI (141 aa). The a divalent metal cation site is built by Glu-379, Glu-383, Asp-463, Glu-464, and Glu-513.

As to quaternary structure, homotetramer. Forms the core of the anti-phage defense complex. Interacts with GajB; 2 GajB dimers dock at opposite sides of the GajA complex to form a 4:4 GajA-GajB assembly (GajAB). GajAB interacts with Bacillus phage Phi3T Gad1 protein; this interaction forms a 4:4:8 GajAB-Gad1 complex and leads to GajAB inhibition. The cofactor is Mg(2+). Mn(2+) is required as a cofactor.

Endonuclease activity inhibited by all NTPs, dNTPs, NDPs (at 0.5 mM, UDP not tested) and AMP-PNP; not inhibited by any tested NMP, dNMP or nucleoside. Inhibited by 100 mM NaCl, 100 mM KCl, 0.5 mM Co(2+) and 0.5 mM Ni(2+). In terms of biological role, component of antiviral defense system Gabija type I, composed of GajA and GajB. Endonuclease that nicks double-stranded DNA within the sequence 5'-TNNNCGGGNNA-3' in the absence of nucleotides (NTP, dNTP and NDPs), cleaving after C-1. Has no detected ATPase activity. Expression of Gabija type I in B.subtilis (strain BEST7003) confers resistance to phages phi105, phi29, rho14, SpBeta and SBSphiC. Expression of Gabija type I in E.coli B (strain ATCC 11303) confers resistance to phage T7. It is thought that this enzyme is strongly suppressed during physiological growth (in E.coli total nucleotide concentration is over 8.7 mM in mid-log phase), but during viral replication, when nucleotides are rapidly consumed, it is de-suppressed and degrades target DNA. The polypeptide is Endonuclease GajA (Bacillus cereus (strain VD045)).